A 404-amino-acid chain; its full sequence is Probable protein phosphatase 1N (404 aa).

In terms of domain architecture, PPM-type phosphatase spans 59-319; it reads RFGASAVQGW…DNMTCMVVCF (261 aa). Asp-96, Gly-97, Asp-267, and Asp-310 together coordinate Mn(2+).

The protein belongs to the PP2C family. Mg(2+) serves as cofactor. The cofactor is Mn(2+).

The catalysed reaction is O-phospho-L-seryl-[protein] + H2O = L-seryl-[protein] + phosphate. It catalyses the reaction O-phospho-L-threonyl-[protein] + H2O = L-threonyl-[protein] + phosphate. This Mus musculus (Mouse) protein is Probable protein phosphatase 1N (Ppm1n).